We begin with the raw amino-acid sequence, 274 residues long: Rhamnulose-1-phosphate aldolase (274 aa).

Glutamate 117 is a catalytic residue. Zn(2+) contacts are provided by histidine 141, histidine 143, and histidine 212.

This sequence belongs to the aldolase class II family. RhaD subfamily. In terms of assembly, homotetramer. It depends on Zn(2+) as a cofactor.

It is found in the cytoplasm. The catalysed reaction is L-rhamnulose 1-phosphate = (S)-lactaldehyde + dihydroxyacetone phosphate. The protein operates within carbohydrate degradation; L-rhamnose degradation; glycerone phosphate from L-rhamnose: step 3/3. Its function is as follows. Catalyzes the reversible cleavage of L-rhamnulose-1-phosphate to dihydroxyacetone phosphate (DHAP) and L-lactaldehyde. This Pectobacterium atrosepticum (strain SCRI 1043 / ATCC BAA-672) (Erwinia carotovora subsp. atroseptica) protein is Rhamnulose-1-phosphate aldolase.